A 791-amino-acid polypeptide reads, in one-letter code: Lon protease (791 aa).

The region spanning 3–209 (KPILISRAIV…TILHLLFDQL (207 aa)) is the Lon N-terminal domain. 365–372 (GPPGVGKT) contributes to the ATP binding site. The Lon proteolytic domain occupies 605 to 790 (TTIPGIVNGM…DEVYNIVFGE (186 aa)). Active-site residues include Ser696 and Lys739.

It belongs to the peptidase S16 family. As to quaternary structure, homohexamer. Organized in a ring with a central cavity.

It is found in the cytoplasm. The enzyme catalyses Hydrolysis of proteins in presence of ATP.. Functionally, ATP-dependent serine protease that mediates the selective degradation of mutant and abnormal proteins as well as certain short-lived regulatory proteins. Required for cellular homeostasis and for survival from DNA damage and developmental changes induced by stress. Degrades polypeptides processively to yield small peptide fragments that are 5 to 10 amino acids long. Binds to DNA in a double-stranded, site-specific manner. The sequence is that of Lon protease from Ureaplasma parvum serovar 3 (strain ATCC 27815 / 27 / NCTC 11736).